Reading from the N-terminus, the 272-residue chain is NAD kinase (272 aa).

The active-site Proton acceptor is D62. Residues 62-63 (DG), R67, 129-130 (NE), R140, K157, D159, 170-175 (SSYSSS), A194, and Q229 each bind NAD(+).

The protein belongs to the NAD kinase family. A divalent metal cation is required as a cofactor.

It localises to the cytoplasm. The enzyme catalyses NAD(+) + ATP = ADP + NADP(+) + H(+). In terms of biological role, involved in the regulation of the intracellular balance of NAD and NADP, and is a key enzyme in the biosynthesis of NADP. Catalyzes specifically the phosphorylation on 2'-hydroxyl of the adenosine moiety of NAD to yield NADP. The chain is NAD kinase from Thermoplasma volcanium (strain ATCC 51530 / DSM 4299 / JCM 9571 / NBRC 15438 / GSS1).